Consider the following 365-residue polypeptide: 3-dehydroquinate synthase (365 aa).

NAD(+) is bound by residues 69–74, 103–107, 127–128, lysine 140, and lysine 149; these read DGEKYK, GVIGD, and TT. Zn(2+)-binding residues include glutamate 182, histidine 245, and histidine 262.

It belongs to the sugar phosphate cyclases superfamily. Dehydroquinate synthase family. Requires Co(2+) as cofactor. Zn(2+) is required as a cofactor. It depends on NAD(+) as a cofactor.

It localises to the cytoplasm. It catalyses the reaction 7-phospho-2-dehydro-3-deoxy-D-arabino-heptonate = 3-dehydroquinate + phosphate. The protein operates within metabolic intermediate biosynthesis; chorismate biosynthesis; chorismate from D-erythrose 4-phosphate and phosphoenolpyruvate: step 2/7. Its function is as follows. Catalyzes the conversion of 3-deoxy-D-arabino-heptulosonate 7-phosphate (DAHP) to dehydroquinate (DHQ). The protein is 3-dehydroquinate synthase of Pseudomonas entomophila (strain L48).